The primary structure comprises 1163 residues: Guanylate cyclase 32E (1163 aa).

An N-terminal signal peptide occupies residues 1–25; the sequence is MPGPCASAAAFSCILVLLLLGCQRS. Topologically, residues 29-469 are extracellular; the sequence is AAGATVSSMR…LCPRKKLDWR (441 aa). N-linked (GlcNAc...) asparagine glycans are attached at residues asparagine 147, asparagine 206, asparagine 368, and asparagine 390. Residues 470–490 form a helical membrane-spanning segment; sequence YLVSGPLCALVVVVAIALLIK. Residues 491-1163 lie on the Cytoplasmic side of the membrane; that stretch reads HYRYEQTLAG…RSAPSITFRL (673 aa). In terms of domain architecture, Protein kinase spans 507 to 800; sequence MKDVTVINLG…IRLVRMHLKE (294 aa). The 131-residue stretch at 873–1003 folds into the Guanylate cyclase domain; that stretch reads TILFSDIVGF…DTVNTASRME (131 aa).

It belongs to the adenylyl cyclase class-4/guanylyl cyclase family.

It is found in the membrane. It catalyses the reaction GTP = 3',5'-cyclic GMP + diphosphate. This Drosophila melanogaster (Fruit fly) protein is Guanylate cyclase 32E (Gyc32E).